A 336-amino-acid polypeptide reads, in one-letter code: SCP domain-containing protein 1 (336 aa).

Residues 1–18 (MEFKLLLVLCFNIGLICS) form the signal peptide. N-linked (GlcNAc...) asparagine glycosylation is present at N47. Residues 73–85 (QGGNTAPSSSLPG) show a composition bias toward polar residues. Residues 73 to 94 (QGGNTAPSSSLPGVSSMPMPSA) are disordered. The SCP domain maps to 175 to 292 (LEEHNKFRSD…YCGDMSFIAC (118 aa)). N-linked (GlcNAc...) asparagine glycans are attached at residues N213 and N257.

As to expression, component of the acid-insoluble and acid-soluble organic matrix of calcified layers of the shell (at protein level).

The protein resides in the secreted. This chain is SCP domain-containing protein 1, found in Lottia gigantea (Giant owl limpet).